The primary structure comprises 366 residues: MNKVVLLCRPGFEKECAAEITDKAGQREIFGFARVKENAGYVIYECYQPDDGDKLIRELPFSSLIFARQWFVVGELLQHLPPEDRITPIVGMLQGVVEKGGELRVEVADTNESKELLKFCRKFTVPLRAALRDAGVLANYETPKRPVVHVFFIAPGCCYTGYSYSNNNSPFYMGIPRLKFPAEAPSRSTLKLEEAFHVFIPADEWDERLANGMWAVDLGACPGGWTYQLVKRNMWVYSVDNGPMAQSLMDTGQVTWLREDGFKFRPTRSNISWMVCDMVEKPAKVAALMAQWLVNGWCRETIFNLKLPMKKRYEEVSHNLAYIQAQLDEHGINAQIQARQLYHDREEVTVHVRRIWAAVGGRRDER.

S-adenosyl-L-methionine contacts are provided by residues serine 188, cysteine 221–glycine 224, aspartate 240, aspartate 260, and aspartate 277. Catalysis depends on lysine 306, which acts as the Proton acceptor.

It belongs to the class I-like SAM-binding methyltransferase superfamily. RNA methyltransferase RlmE family. RlmM subfamily. As to quaternary structure, monomer.

It localises to the cytoplasm. It catalyses the reaction cytidine(2498) in 23S rRNA + S-adenosyl-L-methionine = 2'-O-methylcytidine(2498) in 23S rRNA + S-adenosyl-L-homocysteine + H(+). In terms of biological role, catalyzes the 2'-O-methylation at nucleotide C2498 in 23S rRNA. In Shigella flexneri serotype 5b (strain 8401), this protein is Ribosomal RNA large subunit methyltransferase M.